The primary structure comprises 200 residues: GTP cyclohydrolase-2 (200 aa).

49 to 53 is a GTP binding site; it reads RIHSE. 3 residues coordinate Zn(2+): C54, C65, and C67. GTP contacts are provided by residues Q70, 92-94, and T114; that span reads EGR. The active-site Proton acceptor is the D126. R128 serves as the catalytic Nucleophile. T149 and K154 together coordinate GTP.

The protein belongs to the GTP cyclohydrolase II family. Zn(2+) serves as cofactor.

The enzyme catalyses GTP + 4 H2O = 2,5-diamino-6-hydroxy-4-(5-phosphoribosylamino)-pyrimidine + formate + 2 phosphate + 3 H(+). The protein operates within cofactor biosynthesis; riboflavin biosynthesis; 5-amino-6-(D-ribitylamino)uracil from GTP: step 1/4. Its function is as follows. Catalyzes the conversion of GTP to 2,5-diamino-6-ribosylamino-4(3H)-pyrimidinone 5'-phosphate (DARP), formate and pyrophosphate. In Saccharophagus degradans (strain 2-40 / ATCC 43961 / DSM 17024), this protein is GTP cyclohydrolase-2.